Consider the following 60-residue polypeptide: Large ribosomal subunit protein uL30 (60 aa).

The protein belongs to the universal ribosomal protein uL30 family. In terms of assembly, part of the 50S ribosomal subunit.

The sequence is that of Large ribosomal subunit protein uL30 from Levilactobacillus brevis (strain ATCC 367 / BCRC 12310 / CIP 105137 / JCM 1170 / LMG 11437 / NCIMB 947 / NCTC 947) (Lactobacillus brevis).